Reading from the N-terminus, the 379-residue chain is Tetraacyldisaccharide 4'-kinase (379 aa).

Position 63 to 70 (63 to 70 (AVGGAGKT)) interacts with ATP.

It belongs to the LpxK family.

The enzyme catalyses a lipid A disaccharide + ATP = a lipid IVA + ADP + H(+). Its pathway is glycolipid biosynthesis; lipid IV(A) biosynthesis; lipid IV(A) from (3R)-3-hydroxytetradecanoyl-[acyl-carrier-protein] and UDP-N-acetyl-alpha-D-glucosamine: step 6/6. Transfers the gamma-phosphate of ATP to the 4'-position of a tetraacyldisaccharide 1-phosphate intermediate (termed DS-1-P) to form tetraacyldisaccharide 1,4'-bis-phosphate (lipid IVA). The protein is Tetraacyldisaccharide 4'-kinase of Anaeromyxobacter dehalogenans (strain 2CP-1 / ATCC BAA-258).